Reading from the N-terminus, the 412-residue chain is Mannose-1-phosphate guanylyltransferase regulatory subunit alpha (412 aa).

The segment at 6–259 (TKAIILVGGP…VGFWRQIKNA (254 aa)) is substrate-binding domain. 2 residues coordinate GDP-alpha-D-mannose: Glu-88 and Gln-255. Positions 281-412 (LKKGNNIIGN…DRNYNNEIIL (132 aa)) are hexapeptide repeat domain.

This sequence belongs to the transferase hexapeptide repeat family. As to quaternary structure, component of the GMPPA-GMPPB mannose-1-phosphate guanylyltransferase complex composed of 4 gmppA subunits and 8 gmppB subunits; the complex is organized into three layers, a central layer made up of 2 gmppA dimers sandwiched between two layers each made up of 2 gmppB dimers.

Regulatory subunit of the GMPPA-GMPPB mannose-1-phosphate guanylyltransferase complex; reduces the catalytic activity of GMPPB when part of the complex. Mediates allosteric feedback inhibition of GMPPB catalytic activity upon binding GDP-alpha-D-mannose. Together with GMPPB regulates GDP-alpha-D-mannose levels. This chain is Mannose-1-phosphate guanylyltransferase regulatory subunit alpha (gmppA), found in Dictyostelium discoideum (Social amoeba).